A 155-amino-acid chain; its full sequence is IIAMENHPVRWTTPLGLPVVQPYRKLGRHLIKTSLQILTLQRETDKVMVKRQRTAFPPNFVHSLDGSHMMMTAIACKESGLSFAGVHDSYWTHASDVDQMNKILREKFVELYDAPILENLLESFQQSFPDLQFPPLPERGDFDLREVLESPYFFN.

Aspartate 88 is a catalytic residue.

The protein belongs to the phage and mitochondrial RNA polymerase family.

The catalysed reaction is RNA(n) + a ribonucleoside 5'-triphosphate = RNA(n+1) + diphosphate. Functionally, DNA-dependent RNA polymerase catalyzes the transcription of DNA into RNA using the four ribonucleoside triphosphates as substrates. The chain is DNA-directed RNA polymerase 1A (RPOT1-SYL) from Nicotiana tabacum (Common tobacco).